Reading from the N-terminus, the 376-residue chain is Flap endonuclease 1 (376 aa).

The interval Met-1 to Ala-105 is N-domain. A Mg(2+)-binding site is contributed by Asp-34. The DNA site is built by Arg-47 and Arg-71. Mg(2+)-binding residues include Asp-87, Glu-159, Glu-161, Asp-180, and Asp-182. Residues Gln-123 to Tyr-254 form an I-domain region. Glu-159 is a DNA binding site. 2 residues coordinate DNA: Gly-232 and Asp-234. A Mg(2+)-binding site is contributed by Asp-234. The interaction with PCNA stretch occupies residues Ala-336–Phe-344. Positions Ser-352–Lys-376 are disordered. Residues Val-360–Lys-376 are compositionally biased toward basic residues.

This sequence belongs to the XPG/RAD2 endonuclease family. FEN1 subfamily. As to quaternary structure, interacts with PCNA. Three molecules of FEN1 bind to one PCNA trimer with each molecule binding to one PCNA monomer. PCNA stimulates the nuclease activity without altering cleavage specificity. Requires Mg(2+) as cofactor. Post-translationally, phosphorylated. Phosphorylation upon DNA damage induces relocalization to the nuclear plasma.

It is found in the nucleus. The protein resides in the nucleolus. It localises to the nucleoplasm. The protein localises to the mitochondrion. In terms of biological role, structure-specific nuclease with 5'-flap endonuclease and 5'-3' exonuclease activities involved in DNA replication and repair. During DNA replication, cleaves the 5'-overhanging flap structure that is generated by displacement synthesis when DNA polymerase encounters the 5'-end of a downstream Okazaki fragment. It enters the flap from the 5'-end and then tracks to cleave the flap base, leaving a nick for ligation. Also involved in the long patch base excision repair (LP-BER) pathway, by cleaving within the apurinic/apyrimidinic (AP) site-terminated flap. Acts as a genome stabilization factor that prevents flaps from equilibrating into structures that lead to duplications and deletions. Also possesses 5'-3' exonuclease activity on nicked or gapped double-stranded DNA, and exhibits RNase H activity. Also involved in replication and repair of rDNA and in repairing mitochondrial DNA. The sequence is that of Flap endonuclease 1 from Entamoeba dispar (strain ATCC PRA-260 / SAW760).